A 266-amino-acid chain; its full sequence is Outer kinetochore KNL1 complex subunit ZWINT (266 aa).

Residues 95–115 (DQNPDALASEDTSRQKATETK) are disordered. Residues 105–115 (DTSRQKATETK) show a composition bias toward basic and acidic residues. Residues 136 to 237 (LSEALPQVKE…QRNQSYLQLL (102 aa)) are a coiled coil. S232 and S265 each carry phosphoserine.

As to quaternary structure, component of the KNL1 complex composed of KNL1 and ZWINT. Part of the ten-subunit outer kinetochore KMN network that includes the KNL1, MIS12 and NDC80 complexes; a bioriented kinetochore contains approximately 150 copies of the network. Interacts with the MIS12 complex subunits MIS12 DSN1, and PMF1. Interacts with the NDC80 complex subunit NDC80 during mitosis. Interacts with ZW10. Interacts with CETN3. In terms of tissue distribution, expressed abundantly in brain and at lower levels in testis and kidney.

It localises to the nucleus. Its subcellular location is the chromosome. The protein localises to the centromere. It is found in the kinetochore. Its function is as follows. Acts as a component of the outer kinetochore KNL1 complex that serves as a docking point for spindle assembly checkpoint components and mediates microtubule-kinetochore interactions. Kinetochores, consisting of a centromere-associated inner segment and a microtubule-contacting outer segment, play a crucial role in chromosome segregation by mediating the physical connection between centromeric DNA and spindle microtubules. The outer kinetochore is made up of the ten-subunit KMN network, comprising the MIS12, NDC80 and KNL1 complexes, and auxiliary microtubule-associated components; together they connect the outer kinetochore with the inner kinetochore, bind microtubules, and mediate interactions with mitotic checkpoint proteins that delay anaphase until chromosomes are bioriented on the spindle. Targets the RZZ complex to the kinetochore at prometaphase. Recruits MAD2L1 to the kinetochore, but is not required for BUB1B localization. In addition to orienting mitotic chromosomes, it is also essential for alignment of homologous chromosomes during meiotic metaphase I. In meiosis I, required to activate the spindle assembly checkpoint at unattached kinetochores to correct erroneous kinetochore-microtubule attachments. The protein is Outer kinetochore KNL1 complex subunit ZWINT (Zwint) of Rattus norvegicus (Rat).